Here is a 540-residue protein sequence, read N- to C-terminus: Glucose-6-phosphate isomerase (540 aa).

E350 acts as the Proton donor in catalysis. Residues H381 and K503 contribute to the active site.

Belongs to the GPI family.

The protein resides in the cytoplasm. The catalysed reaction is alpha-D-glucose 6-phosphate = beta-D-fructose 6-phosphate. It participates in carbohydrate biosynthesis; gluconeogenesis. The protein operates within carbohydrate degradation; glycolysis; D-glyceraldehyde 3-phosphate and glycerone phosphate from D-glucose: step 2/4. Functionally, catalyzes the reversible isomerization of glucose-6-phosphate to fructose-6-phosphate. The chain is Glucose-6-phosphate isomerase from Burkholderia pseudomallei (strain 1710b).